A 67-amino-acid polypeptide reads, in one-letter code: Conotoxin Cl6.6b (67 aa).

Residues 1–24 form the signal peptide; it reads MKLTCVLIAAVLLLAVCQLDSADA. A propeptide spanning residues 25-37 is cleaved from the precursor; the sequence is TGYMRKNPSLRSP. Disulfide bonds link cysteine 43-cysteine 57, cysteine 50-cysteine 61, and cysteine 56-cysteine 65.

This sequence belongs to the conotoxin O1 superfamily. Expressed by the venom duct.

It is found in the secreted. The protein is Conotoxin Cl6.6b of Californiconus californicus (California cone).